The chain runs to 512 residues: 2,3-bisphosphoglycerate-independent phosphoglycerate mutase (512 aa).

Positions 18 and 68 each coordinate Mn(2+). Residue serine 68 is the Phosphoserine intermediate of the active site. Substrate-binding positions include histidine 129, arginine 159 to aspartate 160, arginine 191, arginine 197, arginine 265 to arginine 268, and lysine 338. Mn(2+)-binding residues include aspartate 403, histidine 407, aspartate 444, histidine 445, and histidine 462.

The protein belongs to the BPG-independent phosphoglycerate mutase family. Monomer. Mn(2+) serves as cofactor.

The catalysed reaction is (2R)-2-phosphoglycerate = (2R)-3-phosphoglycerate. It participates in carbohydrate degradation; glycolysis; pyruvate from D-glyceraldehyde 3-phosphate: step 3/5. In terms of biological role, catalyzes the interconversion of 2-phosphoglycerate and 3-phosphoglycerate. This is 2,3-bisphosphoglycerate-independent phosphoglycerate mutase from Mesomycoplasma hyopneumoniae (strain 232) (Mycoplasma hyopneumoniae).